Consider the following 301-residue polypeptide: ATP synthase gamma chain (301 aa).

It belongs to the ATPase gamma chain family. As to quaternary structure, F-type ATPases have 2 components, CF(1) - the catalytic core - and CF(0) - the membrane proton channel. CF(1) has five subunits: alpha(3), beta(3), gamma(1), delta(1), epsilon(1). CF(0) has three main subunits: a, b and c.

It localises to the cell inner membrane. In terms of biological role, produces ATP from ADP in the presence of a proton gradient across the membrane. The gamma chain is believed to be important in regulating ATPase activity and the flow of protons through the CF(0) complex. The protein is ATP synthase gamma chain of Helicobacter pylori (strain Shi470).